A 695-amino-acid chain; its full sequence is Polyribonucleotide nucleotidyltransferase (695 aa).

Mg(2+) is bound by residues aspartate 486 and aspartate 492. In terms of domain architecture, KH spans 553–612 (PRMIVFKINPEKIRDVIGKGGATIRALTEETGTTIDIVDDGTVKIFSADKADGQEAKRRV). In terms of domain architecture, S1 motif spans 622–690 (GKIYEGRVSR…KQGRVRLSVK (69 aa)).

It belongs to the polyribonucleotide nucleotidyltransferase family. In terms of assembly, component of the RNA degradosome, which is a multiprotein complex involved in RNA processing and mRNA degradation. Mg(2+) is required as a cofactor.

It localises to the cytoplasm. It carries out the reaction RNA(n+1) + phosphate = RNA(n) + a ribonucleoside 5'-diphosphate. In terms of biological role, involved in mRNA degradation. Catalyzes the phosphorolysis of single-stranded polyribonucleotides processively in the 3'- to 5'-direction. The polypeptide is Polyribonucleotide nucleotidyltransferase (Nitrosococcus oceani (strain ATCC 19707 / BCRC 17464 / JCM 30415 / NCIMB 11848 / C-107)).